The sequence spans 293 residues: tRNA (guanine-N(7)-)-methyltransferase (293 aa).

A compositionally biased stretch (basic and acidic residues) spans 1 to 31; it reads MGGDKIKKDKRQKREDYRAAMRKDDISELPR. Disordered stretches follow at residues 1–33 and 68–97; these read MGGD…PRKK and IVDE…TPLR. Over residues 75–85 the composition is skewed to pro residues; that stretch reads TSPPPPPPVPE. S-adenosyl-L-methionine contacts are provided by residues G111, 134–135, 169–170, and C189; these read EI and NT. The active site involves D192. An S-adenosyl-L-methionine-binding site is contributed by 267–269; sequence TEE.

The protein belongs to the class I-like SAM-binding methyltransferase superfamily. TrmB family. As to quaternary structure, forms a complex with TRM82.

Its subcellular location is the nucleus. It catalyses the reaction guanosine(46) in tRNA + S-adenosyl-L-methionine = N(7)-methylguanosine(46) in tRNA + S-adenosyl-L-homocysteine. The protein operates within tRNA modification; N(7)-methylguanine-tRNA biosynthesis. Its function is as follows. Catalyzes the formation of N(7)-methylguanine at position 46 (m7G46) in tRNA. This Chaetomium globosum (strain ATCC 6205 / CBS 148.51 / DSM 1962 / NBRC 6347 / NRRL 1970) (Soil fungus) protein is tRNA (guanine-N(7)-)-methyltransferase.